The following is a 278-amino-acid chain: Small ribosomal subunit protein uS3 (278 aa).

One can recognise a KH type-2 domain in the interval 38 to 106 (IRKLLATGLE…QVQLNILEVK (69 aa)). Positions 215-278 (AAAAPAGADR…AAGQPETTES (64 aa)) are disordered. Positions 238-278 (SGASGTTATSTDAGRAATEEAPATDAAATAPAAGQPETTES) are enriched in low complexity.

This sequence belongs to the universal ribosomal protein uS3 family. As to quaternary structure, part of the 30S ribosomal subunit. Forms a tight complex with proteins S10 and S14.

In terms of biological role, binds the lower part of the 30S subunit head. Binds mRNA in the 70S ribosome, positioning it for translation. This is Small ribosomal subunit protein uS3 from Mycolicibacterium gilvum (strain PYR-GCK) (Mycobacterium gilvum (strain PYR-GCK)).